A 176-amino-acid chain; its full sequence is Non-specific lipid transfer protein GPI-anchored 12 (176 aa).

Residues 1–20 form the signal peptide; that stretch reads MLTTNTLAVLLLLFLSLCSG. Disulfide bonds link Cys40–Cys83, Cys50–Cys67, Cys68–Cys110, and Cys81–Cys120. A glycan (N-linked (GlcNAc...) asparagine) is linked at Asn46. A lipid anchor (GPI-anchor amidated asparagine) is attached at Asn149. Residues 150 to 176 constitute a propeptide, removed in mature form; sequence GAMTTKYCGVALNSLALLLLFTFLSLS.

Belongs to the plant LTP family. As to expression, preferentially expressed in the endodermis of hypocotyls and roots of seedlings, and in petals and anthers of inflorescences. May also be expressed in siliques, carpels and pedicels.

It is found in the cell membrane. Its function is as follows. Probable lipid transfer protein. In Arabidopsis thaliana (Mouse-ear cress), this protein is Non-specific lipid transfer protein GPI-anchored 12.